The primary structure comprises 89 residues: Sec-independent protein translocase protein TatA (89 aa).

The helical transmembrane segment at 1–21 (MGGISIWQLLIIAVIVVLLFG) threads the bilayer. Positions 65–89 (ADKQADTNQEQAKTEDAKRHDKEQV) are disordered. Residues 76–89 (AKTEDAKRHDKEQV) are compositionally biased toward basic and acidic residues.

The protein belongs to the TatA/E family. As to quaternary structure, the Tat system comprises two distinct complexes: a TatABC complex, containing multiple copies of TatA, TatB and TatC subunits, and a separate TatA complex, containing only TatA subunits. Substrates initially bind to the TatABC complex, which probably triggers association of the separate TatA complex to form the active translocon.

Its subcellular location is the cell inner membrane. In terms of biological role, part of the twin-arginine translocation (Tat) system that transports large folded proteins containing a characteristic twin-arginine motif in their signal peptide across membranes. TatA could form the protein-conducting channel of the Tat system. The polypeptide is Sec-independent protein translocase protein TatA (Shigella flexneri).